The chain runs to 40 residues: Light-harvesting protein B800/830/1020 beta-1 chain (40 aa).

At 1 to 20 the chain is on the cytoplasmic side; it reads ANDIRPLRDFEDEEAQEFHQ. Residues histidine 19 and histidine 37 each contribute to the a bacteriochlorophyll site. A helical membrane pass occupies residues 21-40; that stretch reads AAVQAFFLYVAVAFVAHLPV.

It belongs to the antenna complex beta subunit family. As to quaternary structure, the core complex is formed by different alpha and beta chains, binding bacteriochlorophyll molecules, and arranged most probably in tetrameric structures disposed around the reaction center. The non-pigmented gamma chains may constitute additional components.

The protein localises to the cell inner membrane. In terms of biological role, antenna complexes are light-harvesting systems, which transfer the excitation energy to the reaction centers. The chain is Light-harvesting protein B800/830/1020 beta-1 chain from Halorhodospira halochloris (Ectothiorhodospira halochloris).